Reading from the N-terminus, the 160-residue chain is Outer membrane protein MT2024.1 (160 aa).

Residues 1–22 (MSWSRVIAYGLLPGLALALTCG) form the signal peptide.

The protein localises to the cell outer membrane. The sequence is that of Outer membrane protein MT2024.1 from Mycobacterium tuberculosis (strain CDC 1551 / Oshkosh).